A 354-amino-acid chain; its full sequence is MGNCLSSSDQKEAKDRSVAIDKQIEEDSRKFKKECKILLLGSGESGKSTIVKQMKIIHQNGYTKDELLLYRLTVIKNLVDSAQAMVLALRKFKMEPEMPENRENVDAILQYRVDADPGATLDHAMARKVDSLWKDPIVPAIMERSSEFYLMDSAAYFFDNVNRIGQSDYVPNENDVLRARSKTTGISETRFNMGQLSIHLFDVGGQRSERKKWIHCFEAVTSIIFCVALSEYDQVLLEESGQNRMAESLVLFESVVNSRWFLRTSVILFLNKIDIFKQKIPKQPLSKYFPEYSGGPDINKAAKYILWRFTQTNRARLSIYPHLTQATDTSNIRLVFAAVKETILTNALKDSGIL.

G2 is lipidated: N-myristoyl glycine. C4 is lipidated: S-palmitoyl cysteine. In terms of domain architecture, G-alpha spans 33 to 354 (KECKILLLGS…TNALKDSGIL (322 aa)). Residues 36–49 (KILLLGSGESGKST) are G1 motif. Residues 41–48 (GSGESGKS), 177–183 (LRARSKT), 202–206 (DVGGQ), 271–274 (NKID), and A326 contribute to the GTP site. S48 and T183 together coordinate Mg(2+). The tract at residues 175 to 183 (DVLRARSKT) is G2 motif. Residues 198-207 (IHLFDVGGQR) are G3 motif. The interval 267–274 (ILFLNKID) is G4 motif. The tract at residues 324 to 329 (TQATDT) is G5 motif.

Belongs to the G-alpha family. As to quaternary structure, g proteins are composed of 3 units; alpha, beta and gamma. The alpha chain contains the guanine nucleotide binding site.

In terms of biological role, guanine nucleotide-binding proteins (G proteins) are involved as modulators or transducers in various transmembrane signaling systems. GPA3 plays an active role in transmission of the pheromone signal. The protein is Guanine nucleotide-binding protein alpha-3 subunit (GPA3) of Mycosarcoma maydis (Corn smut fungus).